We begin with the raw amino-acid sequence, 83 residues long: Large ribosomal subunit protein bL31B (83 aa).

It belongs to the bacterial ribosomal protein bL31 family. Type B subfamily. In terms of assembly, part of the 50S ribosomal subunit.

In Lacticaseibacillus casei (strain BL23) (Lactobacillus casei), this protein is Large ribosomal subunit protein bL31B.